We begin with the raw amino-acid sequence, 191 residues long: Thymidine kinase (191 aa).

ATP contacts are provided by residues 9–16 (GTMNSGKT) and 85–88 (DEAQ). Glu-86 (proton acceptor) is an active-site residue. Zn(2+) contacts are provided by Cys-143, Cys-146, Cys-180, and His-183.

It belongs to the thymidine kinase family. In terms of assembly, homotetramer.

The protein resides in the cytoplasm. It carries out the reaction thymidine + ATP = dTMP + ADP + H(+). The chain is Thymidine kinase from Streptococcus gordonii (strain Challis / ATCC 35105 / BCRC 15272 / CH1 / DL1 / V288).